Reading from the N-terminus, the 362-residue chain is tRNA/tmRNA (uracil-C(5))-methyltransferase (362 aa).

S-adenosyl-L-methionine contacts are provided by Gln182, Tyr210, Asn215, Glu231, and Asp293. Catalysis depends on Cys318, which acts as the Nucleophile. Glu352 (proton acceptor) is an active-site residue.

This sequence belongs to the class I-like SAM-binding methyltransferase superfamily. RNA M5U methyltransferase family. TrmA subfamily.

It catalyses the reaction uridine(54) in tRNA + S-adenosyl-L-methionine = 5-methyluridine(54) in tRNA + S-adenosyl-L-homocysteine + H(+). It carries out the reaction uridine(341) in tmRNA + S-adenosyl-L-methionine = 5-methyluridine(341) in tmRNA + S-adenosyl-L-homocysteine + H(+). In terms of biological role, dual-specificity methyltransferase that catalyzes the formation of 5-methyluridine at position 54 (m5U54) in all tRNAs, and that of position 341 (m5U341) in tmRNA (transfer-mRNA). The polypeptide is tRNA/tmRNA (uracil-C(5))-methyltransferase (Neisseria meningitidis serogroup B (strain ATCC BAA-335 / MC58)).